The sequence spans 492 residues: Putative cytochrome P450 136 (492 aa).

Cysteine 439 contributes to the heme binding site.

The protein belongs to the cytochrome P450 family. Requires heme as cofactor.

In Mycobacterium tuberculosis (strain CDC 1551 / Oshkosh), this protein is Putative cytochrome P450 136 (cyp136).